The primary structure comprises 906 residues: Microtubule-associated protein 6 (906 aa).

The calmodulin-binding stretch occupies residues 1–15; that stretch reads MAWPCITRACCIARF. Residues Cys5, Cys10, and Cys11 are each lipidated (S-palmitoyl cysteine). Disordered stretches follow at residues 37-56, 65-411, 441-651, 674-782, and 817-906; these read TEHPGAPPQPPAPLQPALAP, TQPA…RAVA, KPVK…GPVK, NKDS…TAPR, and AKDQ…EGSP. The span at 41–50 shows a compositional bias: pro residues; sequence GAPPQPPAPL. Over residues 93-117 the composition is skewed to low complexity; that stretch reads AAPGRSGLGLGAASASTSGSGPADS. Ser98 carries the phosphoserine modification. The segment at 116-139 is mn 1; that stretch reads DSVMRQDYRAWKVQRPEPSCRPRS. Over residues 119-139 the composition is skewed to basic and acidic residues; the sequence is MRQDYRAWKVQRPEPSCRPRS. Residues 124–138 form a calmodulin-binding region; the sequence is RAWKVQRPEPSCRPR. Tyr141 bears the Phosphotyrosine mark. The segment covering 147–171 has biased composition (basic and acidic residues); it reads PFERETQYQKDFRAWPLPRRGDHPW. The segment at 151–174 is mn 2; the sequence is ETQYQKDFRAWPLPRRGDHPWIPK. The segment at 160-174 is calmodulin-binding; that stretch reads AWPLPRRGDHPWIPK. Residue Ser185 is modified to Phosphoserine. The interval 187 to 201 is calmodulin-binding; it reads PVLGVPKRRPQSQER. Residue Ser207 is modified to Phosphoserine. A Mc-1 repeat occupies 222 to 267; sequence LAAGKASGVDQRDTRRKAGPAWMVTRNEGHEEKPLPPAQSQTQEGG. The interval 222–405 is 4 X approximate tandem repeat Mc; the sequence is LAAGKASGVD…HAQGTGPEGG (184 aa). Calmodulin-binding regions lie at residues 235–249, 280–294, 325–339, 375–389, 435–449, 486–500, and 513–527; these read TRRKAGPAWMVTRNE, DTRRKAGPAWMVTRS, RDTRRKAGPAWMVTR, RKAGPAWMVRRSEGH, RAWTDIKPVKPIKAK, RRRIRSLYSEPFKEC, and PKKTSTSHKPPRKAK. One copy of the Mc-2 repeat lies at 268-313; that stretch reads PAAGKASGADQRDTRRKAGPAWMVTRSEGHEEKPLPPAQSQTQEGG. The Mc-3 repeat unit spans residues 314–359; it reads PAAGKASGADQRDTRRKAGPAWMVTRTEGHEETPLPPAQSQTQEGG. A Mc-4 repeat occupies 360–405; sequence PAAGKASGADERDTRRKAGPAWMVRRSEGHEQTPAAHAQGTGPEGG. Positions 427-450 are mn 3; it reads SSSYRNEFRAWTDIKPVKPIKAKP. Residues 496–505 show a composition bias toward basic and acidic residues; the sequence is PFKECPKVEK. Residues 512 to 527 show a composition bias toward basic residues; it reads KPKKTSTSHKPPRKAK. Basic and acidic residues predominate over residues 549–573; that stretch reads KPDDKEQSKEMNNKLAEAKESRVKP. Residues Ser632 and Ser687 each carry the phosphoserine modification. A compositionally biased stretch (polar residues) spans 695–711; that stretch reads KNQSPVVPASTKDQSFP. The span at 715–742 shows a compositional bias: basic and acidic residues; sequence PRKDPGPVIPEPEKDRAPTVPERRKDQH. Ser905 is modified (phosphoserine).

The protein belongs to the STOP family. In terms of assembly, interacts with calmodulin (via C-terminus); the interaction is dependent on Ca(2+). Interacts (via C-terminus) with TMEM106B (via N-terminus). Interacts with ZDHHC13 (via ANK repeats). Interacts with ZDHHC17 (via ANK repeats). In terms of processing, palmitoylated. Probably depalmitoylated by ABHD17A, ABHD17B and ABHD17C. During neuronal polarization, palmitoylation and depalmitoylation cycles regulate MAP6 shuttling between secretory vesicles and microtubules, and its polarized distribution in the axon. As to expression, isoform 1 is specifically expressed in adult brain. Isoform 2 is predominantly expressed in embryonic brain; expression persists at low levels in the adult brain. Isoform 3 is expressed at high levels in lung and at lower levels in testis, heart, muscle and kidney (at protein level). Oligodendrocytes express a major isoform of 89 kDa (O-STOP). Astrocytes also express an isoform of 60 kDa (A-STOP).

The protein resides in the cytoplasm. It localises to the cytoskeleton. It is found in the golgi apparatus. The protein localises to the cell projection. Its subcellular location is the axon. The protein resides in the dendrite. It localises to the cytoplasmic vesicle. It is found in the secretory vesicle membrane. Functionally, involved in microtubule stabilization in many cell types, including neuronal cells. Specifically has microtubule cold stabilizing activity. Involved in dendrite morphogenesis and maintenance by regulating lysosomal trafficking via its interaction with TMEM106B. Regulates KIF5A-mediated axonal cargo transport. Regulates axonal growth during neuron polarization. In Mus musculus (Mouse), this protein is Microtubule-associated protein 6 (Map6).